Here is a 300-residue protein sequence, read N- to C-terminus: Ribonuclease HIII (300 aa).

Positions 86–300 (RSRIGVDESG…FNEVLGSGNQ (215 aa)) constitute an RNase H type-2 domain. Positions 92, 93, and 196 each coordinate a divalent metal cation.

This sequence belongs to the RNase HII family. RnhC subfamily. Mn(2+) is required as a cofactor. Requires Mg(2+) as cofactor.

Its subcellular location is the cytoplasm. The catalysed reaction is Endonucleolytic cleavage to 5'-phosphomonoester.. Functionally, endonuclease that specifically degrades the RNA of RNA-DNA hybrids. This Chlamydia trachomatis serovar A (strain ATCC VR-571B / DSM 19440 / HAR-13) protein is Ribonuclease HIII.